Here is a 273-residue protein sequence, read N- to C-terminus: Large ribosomal subunit protein uL2cz/uL2cy (273 aa).

Disordered stretches follow at residues 1–23 (MAIH…SQVK) and 223–273 (NPVD…RRSK).

The protein belongs to the universal ribosomal protein uL2 family. As to quaternary structure, part of the 50S ribosomal subunit.

The protein resides in the plastid. Its subcellular location is the chloroplast. The polypeptide is Large ribosomal subunit protein uL2cz/uL2cy (rpl2-A) (Oenothera argillicola (Appalachian evening primrose)).